The sequence spans 88 residues: FAD assembly factor SdhE (88 aa).

It belongs to the SdhE FAD assembly factor family. In terms of assembly, monomer. Makes weak or transient interactions with SdhA. Interacts with YgfX. Interacts with FrdA.

The protein localises to the cytoplasm. The protein operates within antibiotic biosynthesis; prodigiosin biosynthesis. Functionally, an FAD assembly protein, which accelerates covalent attachment of the cofactor into other proteins. Plays an essential role in the assembly of succinate dehydrogenase (SDH, respiratory complex II), an enzyme complex that is a component of both the tricarboxylic acid cycle and the electron transport chain, and which couples the oxidation of succinate to fumarate with the reduction of ubiquinone (coenzyme Q) to ubiquinol. Required for flavinylation (covalent attachment of FAD) of the flavoprotein subunit SdhA of SDH. Required for flavinylation of the flavoprotein subunit FrdA of fumarate reductase (FRD). Flavinylation of SDH and FRD occurs in a similar but not identical manner, as site-specific mutations display subtle differences between them. Flavinylates SdhA in vivo in the absence of the other SDH subunits; SdhE mutants that do not flavinylate also interfere with wild-type activity in a possible dominant-negative fashion. Weakly binds to FAD and facilitates its binding to SdhA. Required for production of prodigiosin antibiotic (Pig); overproduction of SdhE in a deletion mutant leads to decreased synthesis of Pig compared to wild-type. Capable of flavinylating A.pasteurianus SdhA when the SDH operon and this gene are expressed in G.oxydans; flavinylation of SdhA is detected only in the presence of sdhE. In Serratia sp. (strain ATCC 39006) (Prodigiosinella confusarubida), this protein is FAD assembly factor SdhE.